Reading from the N-terminus, the 119-residue chain is Large ribosomal subunit protein bL20 (119 aa).

This sequence belongs to the bacterial ribosomal protein bL20 family.

Binds directly to 23S ribosomal RNA and is necessary for the in vitro assembly process of the 50S ribosomal subunit. It is not involved in the protein synthesizing functions of that subunit. The sequence is that of Large ribosomal subunit protein bL20 from Bacillus pumilus (strain SAFR-032).